Here is a 541-residue protein sequence, read N- to C-terminus: Phosphatidylethanolamine transferase Mcr-1 (541 aa).

Residues Met1–Ser14 are Cytoplasmic-facing. The chain crosses the membrane as a helical span at residues Pro15–Phe35. Over Asp36–Asn47 the chain is Periplasmic. Residues Leu48–Leu68 traverse the membrane as a helical segment. Residues Leu69 to Arg73 lie on the Cytoplasmic side of the membrane. The chain crosses the membrane as a helical span at residues Tyr74 to Thr94. The Periplasmic portion of the chain corresponds to Asp95–Asn122. Residues Ala123 to Val143 form a helical membrane-spanning segment. Over Lys144–Arg157 the chain is Cytoplasmic. The helical transmembrane segment at Leu158–His178 threads the bilayer. Residues Tyr179–Arg541 lie on the Periplasmic side of the membrane. The Zn(2+) site is built by Glu246 and Thr285. 3 cysteine pairs are disulfide-bonded: Cys281/Cys291, Cys356/Cys364, and Cys414/Cys422. The residue at position 285 (Thr285) is a Phosphothreonine. The Zn(2+) site is built by Asp465 and His466.

Belongs to the phosphoethanolamine transferase family. Monomer. Post-translationally, phosphorylated at Thr-285; may represent an intermediate in the catalytic mechanism.

It is found in the cell inner membrane. It carries out the reaction lipid A (E. coli) + a 1,2-diacyl-sn-glycero-3-phosphoethanolamine + H(+) = lipid A 4'-(2-aminoethyl diphosphate) (E. coli) + a 1,2-diacyl-sn-glycerol. With respect to regulation, EDTA may inhibit activity. May be inhibited by ethanolamine. Functionally, probably catalyzes the addition of a phosphoethanolamine moiety to lipid A. Phosphoethanolamine modification of lipid A confers polymyxin resistance. Confers resistance to polymyxin-type antibiotics such as colistin; in the E.coli strain W3110. The polypeptide is Phosphatidylethanolamine transferase Mcr-1 (mcr1) (Escherichia coli).